The following is an 879-amino-acid chain: Alanine--tRNA ligase (879 aa).

4 residues coordinate Zn(2+): histidine 566, histidine 570, cysteine 668, and histidine 672.

It belongs to the class-II aminoacyl-tRNA synthetase family. Requires Zn(2+) as cofactor.

The protein localises to the cytoplasm. The enzyme catalyses tRNA(Ala) + L-alanine + ATP = L-alanyl-tRNA(Ala) + AMP + diphosphate. Catalyzes the attachment of alanine to tRNA(Ala) in a two-step reaction: alanine is first activated by ATP to form Ala-AMP and then transferred to the acceptor end of tRNA(Ala). Also edits incorrectly charged Ser-tRNA(Ala) and Gly-tRNA(Ala) via its editing domain. This is Alanine--tRNA ligase from Clostridium botulinum (strain Hall / ATCC 3502 / NCTC 13319 / Type A).